The chain runs to 360 residues: Membrane-bound lytic murein transglycosylase C (360 aa).

The signal sequence occupies residues Met-1 to Ser-16. A lipid anchor (N-palmitoyl cysteine) is attached at Cys-17. Cys-17 carries S-diacylglycerol cysteine lipidation.

This sequence belongs to the transglycosylase Slt family.

It is found in the cell outer membrane. The enzyme catalyses Exolytic cleavage of the (1-&gt;4)-beta-glycosidic linkage between N-acetylmuramic acid (MurNAc) and N-acetylglucosamine (GlcNAc) residues in peptidoglycan, from either the reducing or the non-reducing ends of the peptidoglycan chains, with concomitant formation of a 1,6-anhydrobond in the MurNAc residue.. Murein-degrading enzyme. May play a role in recycling of muropeptides during cell elongation and/or cell division. The sequence is that of Membrane-bound lytic murein transglycosylase C from Cronobacter sakazakii (strain ATCC BAA-894) (Enterobacter sakazakii).